The following is a 127-amino-acid chain: Large ribosomal subunit protein bL19 (127 aa).

It belongs to the bacterial ribosomal protein bL19 family.

In terms of biological role, this protein is located at the 30S-50S ribosomal subunit interface and may play a role in the structure and function of the aminoacyl-tRNA binding site. The protein is Large ribosomal subunit protein bL19 of Trichodesmium erythraeum (strain IMS101).